A 392-amino-acid polypeptide reads, in one-letter code: Dihydroorotate dehydrogenase (quinone) (392 aa).

Residues 90-94 (AGFDK) and threonine 114 each bind FMN. A substrate-binding site is contributed by lysine 94. 139–143 (NRMGF) contributes to the substrate binding site. The FMN site is built by asparagine 173 and asparagine 206. Residue asparagine 206 coordinates substrate. Serine 209 (nucleophile) is an active-site residue. Substrate is bound at residue asparagine 211. FMN is bound by residues lysine 243 and valine 271. 272–273 (NT) provides a ligand contact to substrate. FMN is bound by residues glycine 301, glycine 330, and 351-352 (YT).

It belongs to the dihydroorotate dehydrogenase family. Type 2 subfamily. As to quaternary structure, monomer. FMN serves as cofactor.

Its subcellular location is the cell membrane. It carries out the reaction (S)-dihydroorotate + a quinone = orotate + a quinol. The protein operates within pyrimidine metabolism; UMP biosynthesis via de novo pathway; orotate from (S)-dihydroorotate (quinone route): step 1/1. Its function is as follows. Catalyzes the conversion of dihydroorotate to orotate with quinone as electron acceptor. This is Dihydroorotate dehydrogenase (quinone) from Prochlorococcus marinus (strain MIT 9313).